The chain runs to 331 residues: Ribosomal RNA small subunit methyltransferase C (331 aa).

It belongs to the methyltransferase superfamily. RsmC family. Monomer.

It is found in the cytoplasm. The catalysed reaction is guanosine(1207) in 16S rRNA + S-adenosyl-L-methionine = N(2)-methylguanosine(1207) in 16S rRNA + S-adenosyl-L-homocysteine + H(+). Functionally, specifically methylates the guanine in position 1207 of 16S rRNA in the 30S particle. This Pseudomonas putida (strain W619) protein is Ribosomal RNA small subunit methyltransferase C.